An 842-amino-acid chain; its full sequence is Envelope glycoprotein H (842 aa).

Positions 1–20 are cleaved as a signal peptide; sequence MRRPLCAALLAAAVLALAAG. Residues 21-802 lie on the Virion surface side of the membrane; sequence APAAARGGAG…AGHEAPTFSP (782 aa). N-linked (GlcNAc...) asparagine; by host glycosylation is found at N77 and N112. An interaction with gL region spans residues 240 to 303; sequence ERAAARLAVG…AAGPQRRAYV (64 aa). N-linked (GlcNAc...) asparagine; by host glycans are attached at residues N617, N666, N760, and N783. Residues 803-823 traverse the membrane as a helical segment; the sequence is AYVWASVGGALVAGTTIYAIA. The Intravirion segment spans residues 824–842; it reads KMLCSSVPLARGYSSVPVF.

This sequence belongs to the herpesviridae glycoprotein H family. As to quaternary structure, interacts with glycoprotein L (gL); this interaction is necessary for the correct processing and cell surface expression of gH. The heterodimer gH/gL seems to interact with gB trimers during fusion. In terms of processing, N-glycosylated, O-glycosylated, and sialylated.

It is found in the virion membrane. The protein resides in the host cell membrane. The protein localises to the host endosome membrane. In terms of biological role, the heterodimer glycoprotein H-glycoprotein L is required for the fusion of viral and plasma membranes leading to virus entry into the host cell. Following initial binding to host receptor, membrane fusion is mediated by the fusion machinery composed of gB and the heterodimer gH/gL. May also be involved in the fusion between the virion envelope and the outer nuclear membrane during virion morphogenesis. The chain is Envelope glycoprotein H from Bos taurus (Bovine).